A 342-amino-acid polypeptide reads, in one-letter code: Phosphoribosylformylglycinamidine cyclo-ligase (342 aa).

This sequence belongs to the AIR synthase family.

It is found in the cytoplasm. The enzyme catalyses 2-formamido-N(1)-(5-O-phospho-beta-D-ribosyl)acetamidine + ATP = 5-amino-1-(5-phospho-beta-D-ribosyl)imidazole + ADP + phosphate + H(+). Its pathway is purine metabolism; IMP biosynthesis via de novo pathway; 5-amino-1-(5-phospho-D-ribosyl)imidazole from N(2)-formyl-N(1)-(5-phospho-D-ribosyl)glycinamide: step 2/2. The chain is Phosphoribosylformylglycinamidine cyclo-ligase from Staphylococcus aureus (strain bovine RF122 / ET3-1).